Reading from the N-terminus, the 331-residue chain is Glycerophosphodiester phosphodiesterase 1 (331 aa).

At 1–3 (MWL) the chain is on the cytoplasmic side. A helical transmembrane segment spans residues 4–24 (WEDQGGLLGPFSFVLVLLLVV). Residues 25 to 248 (TRSPFNACVL…PRYSVFWKQS (224 aa)) lie on the Lumenal side of the membrane. The GP-PDE domain occupies 65 to 331 (VSAIAHRGGS…SMLEDCAPHF (267 aa)). Residues glutamate 97 and aspartate 99 each contribute to the Mg(2+) site. Residue asparagine 168 is glycosylated (N-linked (GlcNAc...) asparagine). Aspartate 174 contributes to the Mg(2+) binding site. A helical membrane pass occupies residues 249 to 269 (VFVVLDILLDWSMHNVLWYLC). Residues 270-331 (GISAFLMQKD…SMLEDCAPHF (62 aa)) lie on the Cytoplasmic side of the membrane.

Belongs to the glycerophosphoryl diester phosphodiesterase family. Interacts with PRAF2. Interacts with RGS16. The cofactor is Mg(2+). In terms of processing, N-glycosylated. Widely expressed. Highly expressed in the brain and spinal cord, followed by kidney, liver, and testis. In contrast, little or no expression is detected in the heart or spleen.

It localises to the cell membrane. The protein localises to the cytoplasmic vesicle membrane. It catalyses the reaction sn-glycero-3-phospho-1D-myo-inositol + H2O = myo-inositol + sn-glycerol 3-phosphate + H(+). The enzyme catalyses 1-O-(1Z-octadecenyl)-sn-glycero-3-phospho-(N-5Z,8Z,11Z,14Z-eicosatetraenoyl)-ethanolamine + H2O = 1-O-(1Z-octadecenyl)-sn-glycero-3-phosphate + N-(5Z,8Z,11Z,14Z-eicosatetraenoyl)-ethanolamine + H(+). The catalysed reaction is 1-O-(1Z-octadecenyl)-sn-glycero-3-phospho-(N-9Z-octadecenoyl)-ethanolamine + H2O = 1-O-(1Z-octadecenyl)-sn-glycero-3-phosphate + N-(9Z-octadecenoyl) ethanolamine + H(+). It carries out the reaction 1-O-(1Z-octadecenyl)-sn-glycero-3-phospho-N-hexadecanoyl-ethanolamine + H2O = 1-O-(1Z-octadecenyl)-sn-glycero-3-phosphate + N-hexadecanoylethanolamine + H(+). It catalyses the reaction N-(4Z,7Z,10Z,13Z,16Z,19Z)-docosahexaenoyl-sn-glycero-3-phosphoethanolamine + H2O = N-(4Z,7Z,10Z,13Z,16Z,19Z)-docosahexaenoyl ethanolamine + sn-glycerol 3-phosphate + H(+). The enzyme catalyses N-eicosanoyl-sn-glycero-3-phosphoethanolamine + H2O = N-eicosanoyl ethanolamine + sn-glycerol 3-phosphate + H(+). The catalysed reaction is N-hexadecanoyl-sn-glycero-3-phosphoethanolamine + H2O = N-hexadecanoylethanolamine + sn-glycerol 3-phosphate + H(+). It carries out the reaction N-(9Z-octadecenoyl)-sn-glycero-3-phosphoethanolamine + H2O = N-(9Z-octadecenoyl) ethanolamine + sn-glycerol 3-phosphate + H(+). It catalyses the reaction N-(5Z,8Z,11Z,14Z-eicosatetraenoyl)-sn-glycero-3-phosphoethanolamine + H2O = N-(5Z,8Z,11Z,14Z-eicosatetraenoyl)-ethanolamine + sn-glycerol 3-phosphate + H(+). With respect to regulation, inhibited by EDTA, calcium chloride, and zinc chloride. Enhanced by magnesium chloride. Glycerophosphodiester phosphodiesterase activity can be modulated by G-protein signaling pathways. Its function is as follows. Hydrolyzes the phosphodiester bond of glycerophosphodiesters such as glycerophosphoinositol (GroPIns) and glycerophosphoethanolamine (GroPEth), to yield a glycerol phosphate and an alcohol. Hydrolyzes glycerophospho-N-acylethanolamines to N-acylethanolamines in the brain and participates in bioactive N-acylethanolamine biosynthesis such as anandamide (an endocannabinoid), N-palmitoylethanolamine (an anti-inflammatory), and N-oleoylethanolamine (an anorexic). In addition, has a lysophospholipase D activity by hydrolyzing N-acyl-lysoplasmenylethanolamine (N-acyl-lysoPlsEt) to N-acylethanolamine. However lysophospholipase D activity is lower than glycerophosphodiester phosphodiesterase activity. Has little or no activity towards glycerophosphocholine. The protein is Glycerophosphodiester phosphodiesterase 1 of Mus musculus (Mouse).